The sequence spans 353 residues: Serine proteinase inhibitor 1 (353 aa).

Belongs to the serpin family. Poxviruses subfamily.

It is found in the host cytoplasm. Its function is as follows. Plays a role in mediating viral host range. May act to inhibit a caspase independent form of apoptosis to allow efficient virus replication in infected cells. The sequence is that of Serine proteinase inhibitor 1 (OPG208) from Vaccinia virus (strain Western Reserve) (VACV).